Here is a 160-residue protein sequence, read N- to C-terminus: 6,7-dimethyl-8-ribityllumazine synthase (160 aa).

Residues tryptophan 31, 65 to 67 (SFE), and 89 to 91 (CVV) each bind 5-amino-6-(D-ribitylamino)uracil. (2S)-2-hydroxy-3-oxobutyl phosphate is bound at residue 94-95 (DT). The active-site Proton donor is histidine 97. Phenylalanine 122 is a 5-amino-6-(D-ribitylamino)uracil binding site. Arginine 136 is a (2S)-2-hydroxy-3-oxobutyl phosphate binding site.

It belongs to the DMRL synthase family.

It carries out the reaction (2S)-2-hydroxy-3-oxobutyl phosphate + 5-amino-6-(D-ribitylamino)uracil = 6,7-dimethyl-8-(1-D-ribityl)lumazine + phosphate + 2 H2O + H(+). It participates in cofactor biosynthesis; riboflavin biosynthesis; riboflavin from 2-hydroxy-3-oxobutyl phosphate and 5-amino-6-(D-ribitylamino)uracil: step 1/2. Its function is as follows. Catalyzes the formation of 6,7-dimethyl-8-ribityllumazine by condensation of 5-amino-6-(D-ribitylamino)uracil with 3,4-dihydroxy-2-butanone 4-phosphate. This is the penultimate step in the biosynthesis of riboflavin. This is 6,7-dimethyl-8-ribityllumazine synthase from Parabacteroides distasonis (strain ATCC 8503 / DSM 20701 / CIP 104284 / JCM 5825 / NCTC 11152).